The primary structure comprises 208 residues: Probable GTP-binding protein EngB (208 aa).

The EngB-type G domain maps to 22-195 (GLPEIALAGR…WHSIEEIFIA (174 aa)). GTP-binding positions include 30–37 (GRSNVGKS), 57–61 (GKTRT), 75–78 (DLPG), 142–145 (TKSD), and 174–176 (ISS). The Mg(2+) site is built by S37 and T59.

This sequence belongs to the TRAFAC class TrmE-Era-EngA-EngB-Septin-like GTPase superfamily. EngB GTPase family. It depends on Mg(2+) as a cofactor.

Necessary for normal cell division and for the maintenance of normal septation. In Alkaliphilus oremlandii (strain OhILAs) (Clostridium oremlandii (strain OhILAs)), this protein is Probable GTP-binding protein EngB.